We begin with the raw amino-acid sequence, 70 residues long: Putative membrane protein insertion efficiency factor (70 aa).

The protein belongs to the UPF0161 family.

The protein resides in the cell inner membrane. In terms of biological role, could be involved in insertion of integral membrane proteins into the membrane. In Methylobacillus flagellatus (strain ATCC 51484 / DSM 6875 / VKM B-1610 / KT), this protein is Putative membrane protein insertion efficiency factor.